We begin with the raw amino-acid sequence, 503 residues long: TGF-beta receptor type-1 (503 aa).

The N-terminal stretch at 1–29 (MEVAAGAPRSRLLLFVLAATATLAPEATA) is a signal peptide. Over 30–126 (FQCFCHLCTK…PPSGLGPVEL (97 aa)) the chain is Extracellular. 5 cysteine pairs are disulfide-bonded: cysteine 32-cysteine 50, cysteine 34-cysteine 37, cysteine 44-cysteine 67, cysteine 82-cysteine 96, and cysteine 97-cysteine 102. A glycan (N-linked (GlcNAc...) asparagine) is linked at asparagine 41. The chain crosses the membrane as a helical span at residues 127–147 (AAVIAGPVCFVCISLMLMVYI). At 148-503 (CHNRTVIHHR…QLSQQEGIKM (356 aa)) the chain is on the cytoplasmic side. Position 165 is a phosphoserine (serine 165). The GS domain maps to 175-204 (TTLKDLIYDMTTSGSGSGLPLLVQRTIART). Residues threonine 185 and threonine 186 each carry the phosphothreonine; by TGFBR2 modification. 3 positions are modified to phosphoserine; by TGFBR2: serine 187, serine 189, and serine 191. An FKBP1A-binding motif is present at residues 193 to 194 (LP). Residues 205-495 (IVLQESIGKG…LRIKKTLSQL (291 aa)) form the Protein kinase domain. ATP contacts are provided by residues 211-219 (IGKGRFGEV) and lysine 232. The active-site Proton acceptor is the aspartate 333. Lysine 391 is covalently cross-linked (Glycyl lysine isopeptide (Lys-Gly) (interchain with G-Cter in SUMO)).

Belongs to the protein kinase superfamily. TKL Ser/Thr protein kinase family. TGFB receptor subfamily. In terms of assembly, homodimer; in the endoplasmic reticulum but also at the cell membrane. Heterohexamer; TGFB1, TGFB2 and TGFB3 homodimeric ligands assemble a functional receptor composed of two TGFBR1 and TGFBR2 heterodimers to form a ligand-receptor heterohexamer. The respective affinity of TGBRB1 and TGFBR2 for the ligands may modulate the kinetics of assembly of the receptor and may explain the different biological activities of TGFB1, TGFB2 and TGFB3. Component of a complex composed of TSC22D1 (via N-terminus), TGFBR1 and TGFBR2; the interaction between TSC22D1 and TGFBR1 is inhibited by SMAD7 and promoted by TGFB1. Interacts with CD109; inhibits TGF-beta receptor activation in keratinocytes. Interacts with RBPMS. Interacts (unphosphorylated) with FKBP1A; prevents TGFBR1 phosphorylation by TGFBR2 and stabilizes it in the inactive conformation. Interacts with SMAD2, SMAD3 and ZFYVE9; ZFYVE9 recruits SMAD2 and SMAD3 to the TGF-beta receptor. Interacts with TRAF6 and MAP3K7; induces MAP3K7 activation by TRAF6. Interacts with PARD6A; involved in TGF-beta induced epithelial to mesenchymal transition. Interacts with NEDD4L. Interacts with SMAD7, SMURF1 and SMURF2; SMAD7 recruits NEDD4L, SMURF1 and SMURF2 to the TGF-beta receptor. Interacts with USP15 and VPS39. Interacts with SDCBP (via C-terminus). Interacts with CAV1 and this interaction is impaired in the presence of SDCBP. Interacts with APPL1; interaction is TGF beta dependent; mediates trafficking of the TGFBR1 from the endosomes to the nucleus via microtubules in a TRAF6-dependent manner. Interacts with GPR50; this interaction promotes the constitutive activation of SMAD signaling pathway. It depends on Mg(2+) as a cofactor. Mn(2+) serves as cofactor. Phosphorylated at basal levels in the absence of ligand. Activated upon phosphorylation by TGFBR2, mainly in the GS domain. Phosphorylation in the GS domain abrogates FKBP1A-binding. Post-translationally, N-Glycosylated. In terms of processing, ubiquitinated; undergoes ubiquitination catalyzed by several E3 ubiquitin ligases including SMURF1, SMURF2 and NEDD4L2. Results in the proteasomal and/or lysosomal degradation of the receptor thereby negatively regulating its activity. Deubiquitinated by USP15, leading to stabilization of the protein and enhanced TGF-beta signal. Its ubiquitination and proteasome-mediated degradation is negatively regulated by SDCBP.

The protein resides in the cell membrane. It is found in the cell junction. It localises to the tight junction. Its subcellular location is the membrane raft. The protein localises to the cell surface. It catalyses the reaction L-threonyl-[receptor-protein] + ATP = O-phospho-L-threonyl-[receptor-protein] + ADP + H(+). It carries out the reaction L-seryl-[receptor-protein] + ATP = O-phospho-L-seryl-[receptor-protein] + ADP + H(+). Its activity is regulated as follows. Kept in an inactive conformation by FKBP1A preventing receptor activation in absence of ligand. CD109 is another inhibitor of the receptor. In terms of biological role, transmembrane serine/threonine kinase forming with the TGF-beta type II serine/threonine kinase receptor, TGFBR2, the non-promiscuous receptor for the TGF-beta cytokines TGFB1, TGFB2 and TGFB3. Transduces the TGFB1, TGFB2 and TGFB3 signal from the cell surface to the cytoplasm and is thus regulating a plethora of physiological and pathological processes including cell cycle arrest in epithelial and hematopoietic cells, control of mesenchymal cell proliferation and differentiation, wound healing, extracellular matrix production, immunosuppression and carcinogenesis. The formation of the receptor complex composed of 2 TGFBR1 and 2 TGFBR2 molecules symmetrically bound to the cytokine dimer results in the phosphorylation and the activation of TGFBR1 by the constitutively active TGFBR2. Activated TGFBR1 phosphorylates SMAD2 which dissociates from the receptor and interacts with SMAD4. The SMAD2-SMAD4 complex is subsequently translocated to the nucleus where it modulates the transcription of the TGF-beta-regulated genes. This constitutes the canonical SMAD-dependent TGF-beta signaling cascade. Also involved in non-canonical, SMAD-independent TGF-beta signaling pathways. For instance, TGFBR1 induces TRAF6 autoubiquitination which in turn results in MAP3K7 ubiquitination and activation to trigger apoptosis. Also regulates epithelial to mesenchymal transition through a SMAD-independent signaling pathway through PARD6A phosphorylation and activation. This is TGF-beta receptor type-1 (TGFBR1) from Sus scrofa (Pig).